We begin with the raw amino-acid sequence, 51 residues long: Large ribosomal subunit protein eL39 (51 aa).

Positions 32–51 (KRRVTRSPARRHWRRQKLKA) are disordered.

This sequence belongs to the eukaryotic ribosomal protein eL39 family.

This is Large ribosomal subunit protein eL39 from Pyrobaculum calidifontis (strain DSM 21063 / JCM 11548 / VA1).